The following is a 604-amino-acid chain: Choline transporter-like protein 3 (604 aa).

Residues Asn-90 and Asn-103 are each glycosylated (N-linked (GlcNAc...) asparagine). Transmembrane regions (helical) follow at residues 165 to 185, 195 to 215, 237 to 257, 286 to 306, and 330 to 350; these read DTILGLCAFVFALSLAMLFTF, IIISLVILGLLFVCGVFWWLY, LAFAVITTVVTVVLLALIFTL, LWTFAILVFFWVLWVAVLLSL, and YLWWYHLIGLIWTSEFILTCQ. Residues Asn-454 and Asn-472 are each glycosylated (N-linked (GlcNAc...) asparagine). The next 2 helical transmembrane spans lie at 485-505 and 514-534; these read FIIFLGKVLVVCFSVFGGLMA and VWAIPLLLVAFFAYLAAHSFL. The segment covering 581 to 592 has biased composition (polar residues); the sequence is NARSQGHKNSLP. Residues 581 to 604 are disordered; it reads NARSQGHKNSLPNEEGTELRPIVR.

It belongs to the CTL (choline transporter-like) family. In terms of tissue distribution, expressed in colon, kidney and ileum.

It is found in the membrane. In Rattus norvegicus (Rat), this protein is Choline transporter-like protein 3 (Slc44a3).